A 263-amino-acid polypeptide reads, in one-letter code: Uridylate kinase (263 aa).

29-32 (KVSG) lines the ATP pocket. Gly-71 contacts UMP. ATP is bound by residues Gly-72 and Arg-76. Residues Asp-91 and 152–159 (TGNPFFTT) each bind UMP. ATP-binding residues include Thr-179, Gln-180, Tyr-185, and Asp-188.

Belongs to the UMP kinase family. As to quaternary structure, homohexamer.

The protein localises to the cytoplasm. It catalyses the reaction UMP + ATP = UDP + ADP. The protein operates within pyrimidine metabolism; CTP biosynthesis via de novo pathway; UDP from UMP (UMPK route): step 1/1. Its activity is regulated as follows. Inhibited by UTP. Its function is as follows. Catalyzes the reversible phosphorylation of UMP to UDP. The protein is Uridylate kinase of Maricaulis maris (strain MCS10) (Caulobacter maris).